The sequence spans 111 residues: Universal stress protein B (111 aa).

2 helical membrane passes run 1 to 21 (MIST…NMAR) and 90 to 110 (FLLT…MMMW).

It belongs to the universal stress protein B family.

It localises to the cell inner membrane. The protein is Universal stress protein B of Pectobacterium atrosepticum (strain SCRI 1043 / ATCC BAA-672) (Erwinia carotovora subsp. atroseptica).